A 71-amino-acid chain; its full sequence is Long neurotoxin 1 (71 aa).

5 disulfides stabilise this stretch: C3–C20, C14–C41, C26–C30, C45–C56, and C57–C62.

The protein belongs to the three-finger toxin family. Long-chain subfamily. Type II alpha-neurotoxin sub-subfamily. As to expression, expressed by the venom gland.

The protein resides in the secreted. Functionally, binds with high affinity to muscular (alpha-1/CHRNA1) and neuronal (alpha-7/CHRNA7) nicotinic acetylcholine receptor (nAChR) and inhibits acetylcholine from binding to the receptor, thereby impairing neuromuscular and neuronal transmission. In Naja naja (Indian cobra), this protein is Long neurotoxin 1.